The primary structure comprises 492 residues: Poly(3-hydroxyalkanoate) polymerase subunit PhaC (492 aa).

The region spanning 70 to 336 is the AB hydrolase-1 domain; the sequence is PILIVYALIN…VIEGATGHIG (267 aa). Residues cysteine 150, aspartate 305, and histidine 334 each act as charge relay system in the active site. Residues 359–443 are disordered; the sequence is SETGTDETPD…EELESIDGIG (85 aa). Acidic residues-rich tracts occupy residues 362–371 and 379–388; these read GTDETPDSET and QAEETDETPD.

It belongs to the PHA/PHB synthase family. Heterodimer with PhaE.

It functions in the pathway biopolymer metabolism; poly-(R)-3-hydroxybutanoate biosynthesis. Its function is as follows. Involved in the production of polyhydroxyalkonic acids (PHAs), which are water-insoluble biopolymers used as intracellular energy reserve material when cells grow under conditions of nutrient limitation. PHAs are composed primarily of 3-hydroxybutyric acid (3HB) and 3-hydroxyvaleric acid (3HV). Required for the production of poly-beta-hydroxybutyrate (PHB) and poly(beta-hydroxybutyrate-co-beta-hydroxyvalerate) (PHBV). In Haloferax mediterranei (strain ATCC 33500 / DSM 1411 / JCM 8866 / NBRC 14739 / NCIMB 2177 / R-4) (Halobacterium mediterranei), this protein is Poly(3-hydroxyalkanoate) polymerase subunit PhaC (phaC).